The sequence spans 223 residues: Pyridoxine/pyridoxamine 5'-phosphate oxidase (223 aa).

Substrate-binding positions include 13-16 (RKNY) and K73. FMN is bound by residues 68–73 (RIVLLK), 83–84 (YT), K90, and Q112. Residues Y130, R134, and S138 each coordinate substrate. FMN contacts are provided by residues 147–148 (QS) and W193. 199–201 (RLH) serves as a coordination point for substrate. Residue R203 coordinates FMN.

It belongs to the pyridoxamine 5'-phosphate oxidase family. As to quaternary structure, homodimer. It depends on FMN as a cofactor.

The catalysed reaction is pyridoxamine 5'-phosphate + O2 + H2O = pyridoxal 5'-phosphate + H2O2 + NH4(+). The enzyme catalyses pyridoxine 5'-phosphate + O2 = pyridoxal 5'-phosphate + H2O2. It functions in the pathway cofactor metabolism; pyridoxal 5'-phosphate salvage; pyridoxal 5'-phosphate from pyridoxamine 5'-phosphate: step 1/1. It participates in cofactor metabolism; pyridoxal 5'-phosphate salvage; pyridoxal 5'-phosphate from pyridoxine 5'-phosphate: step 1/1. Functionally, catalyzes the oxidation of either pyridoxine 5'-phosphate (PNP) or pyridoxamine 5'-phosphate (PMP) into pyridoxal 5'-phosphate (PLP). This Rhodopirellula baltica (strain DSM 10527 / NCIMB 13988 / SH1) protein is Pyridoxine/pyridoxamine 5'-phosphate oxidase.